A 214-amino-acid chain; its full sequence is tRNA (guanine-N(7)-)-methyltransferase (214 aa).

S-adenosyl-L-methionine-binding residues include aspartate 35, glutamate 60, asparagine 87, and aspartate 113. The active site involves aspartate 113. Lysine 117 and aspartate 149 together coordinate substrate.

This sequence belongs to the class I-like SAM-binding methyltransferase superfamily. TrmB family.

The enzyme catalyses guanosine(46) in tRNA + S-adenosyl-L-methionine = N(7)-methylguanosine(46) in tRNA + S-adenosyl-L-homocysteine. Its pathway is tRNA modification; N(7)-methylguanine-tRNA biosynthesis. In terms of biological role, catalyzes the formation of N(7)-methylguanine at position 46 (m7G46) in tRNA. This is tRNA (guanine-N(7)-)-methyltransferase from Prochlorococcus marinus (strain NATL1A).